We begin with the raw amino-acid sequence, 434 residues long: D-amino acid dehydrogenase (434 aa).

3-17 (VIVLGSGVIGTTTAY) serves as a coordination point for FAD.

Belongs to the DadA oxidoreductase family. It depends on FAD as a cofactor.

The enzyme catalyses a D-alpha-amino acid + A + H2O = a 2-oxocarboxylate + AH2 + NH4(+). Functionally, oxidative deamination of D-amino acids. The chain is D-amino acid dehydrogenase from Bordetella parapertussis (strain 12822 / ATCC BAA-587 / NCTC 13253).